The following is a 416-amino-acid chain: MISAKEVEDAYDLLKAVVTKTPLQLDPYLSNKYQANIYLKEENLQKVRSFKLRGAYYSISKLSDEQRSKGVVCASAGNHAQGVAFAANQLNISATIFMPVTTPNQKISQVKFFGESHVTIRLIGDTFDESARAAKAFSQDNDKPFIDPFDDENVIAGQGTVALEIFAQAKKQGISLDKIFVQIGGGGLIAGITAYSKERYPQTEIIGVEAKGATSMKAAYSAGQPVTLEHIDKFADGIAVATVGQKTYQLINDKVKQLLAVDEGLISQTILELYSKLGIVAEPAGATSVAALELIKDEIKGKNIVCIISGGNNDISRMQEIEERALVYEGLKHYFVINFPQRPGALRTFVSDILGPNDDITRFEYIKRADKGKGPCLVGILLSDASDYDSLIDRIERFDNRYVNLHGNDSLYELLV.

K51 carries the post-translational modification N6-(pyridoxal phosphate)lysine. Pyridoxal 5'-phosphate contacts are provided by residues N78, 184-188 (GGGGL), and S309. Positions 333 to 407 (HYFVINFPQR…FDNRYVNLHG (75 aa)) constitute an ACT-like domain.

The protein belongs to the serine/threonine dehydratase family. Homotetramer. It depends on pyridoxal 5'-phosphate as a cofactor.

The enzyme catalyses L-threonine = 2-oxobutanoate + NH4(+). It functions in the pathway amino-acid biosynthesis; L-isoleucine biosynthesis; 2-oxobutanoate from L-threonine: step 1/1. Catalyzes the anaerobic formation of alpha-ketobutyrate and ammonia from threonine in a two-step reaction. The first step involved a dehydration of threonine and a production of enamine intermediates (aminocrotonate), which tautomerizes to its imine form (iminobutyrate). Both intermediates are unstable and short-lived. The second step is the nonenzymatic hydrolysis of the enamine/imine intermediates to form 2-ketobutyrate and free ammonia. In the low water environment of the cell, the second step is accelerated by RidA. This chain is L-threonine dehydratase biosynthetic IlvA (ilvA), found in Lactococcus lactis subsp. lactis (strain IL1403) (Streptococcus lactis).